The following is an 813-amino-acid chain: Glycerol-3-phosphate acyltransferase (813 aa).

The HXXXXD motif motif lies at 304–309 (CHRSHI).

Belongs to the GPAT/DAPAT family.

Its subcellular location is the cell inner membrane. The catalysed reaction is sn-glycerol 3-phosphate + an acyl-CoA = a 1-acyl-sn-glycero-3-phosphate + CoA. The protein operates within phospholipid metabolism; CDP-diacylglycerol biosynthesis; CDP-diacylglycerol from sn-glycerol 3-phosphate: step 1/3. This chain is Glycerol-3-phosphate acyltransferase, found in Actinobacillus succinogenes (strain ATCC 55618 / DSM 22257 / CCUG 43843 / 130Z).